Here is a 316-residue protein sequence, read N- to C-terminus: Erythritol catabolism regulatory protein EryD (316 aa).

The H-T-H motif DNA-binding region spans 23-42 (QSAVAKRLGLPSVKAHRLIA).

It belongs to the SorC transcriptional regulatory family.

With respect to regulation, erythritol may act as an inducer, probably by binding to EryD and inhibiting its repressor activity. Functionally, represses the expression of the eryABCD operon, which is involved in erythritol catabolism. The protein is Erythritol catabolism regulatory protein EryD of Brucella abortus (strain 2308).